The primary structure comprises 375 residues: Holliday junction branch migration complex subunit RuvB (375 aa).

Residues 1 to 50 (MAIVSSKSPDPAERRSQAKTKPSVSEPQDSLVRPQAAPEESQRPEDQIRP) are disordered. Residues 13–209 (ERRSQAKTKP…FGLVQRLRFY (197 aa)) are large ATPase domain (RuvB-L). Residues 19 to 28 (KTKPSVSEPQ) are compositionally biased toward polar residues. The segment covering 40–49 (ESQRPEDQIR) has biased composition (basic and acidic residues). ATP-binding positions include I48, R49, G90, K93, T94, T95, 156–158 (EDF), R199, Y209, and R246. T94 provides a ligand contact to Mg(2+). A small ATPAse domain (RuvB-S) region spans residues 210-280 (EVEALTDIVQ…IAATALELYN (71 aa)). The interval 283–375 (PCGLDWTDRR…LQQLLTEPET (93 aa)) is head domain (RuvB-H). DNA contacts are provided by R338 and R343.

This sequence belongs to the RuvB family. As to quaternary structure, homohexamer. Forms an RuvA(8)-RuvB(12)-Holliday junction (HJ) complex. HJ DNA is sandwiched between 2 RuvA tetramers; dsDNA enters through RuvA and exits via RuvB. An RuvB hexamer assembles on each DNA strand where it exits the tetramer. Each RuvB hexamer is contacted by two RuvA subunits (via domain III) on 2 adjacent RuvB subunits; this complex drives branch migration. In the full resolvosome a probable DNA-RuvA(4)-RuvB(12)-RuvC(2) complex forms which resolves the HJ.

The protein localises to the cytoplasm. The enzyme catalyses ATP + H2O = ADP + phosphate + H(+). In terms of biological role, the RuvA-RuvB-RuvC complex processes Holliday junction (HJ) DNA during genetic recombination and DNA repair, while the RuvA-RuvB complex plays an important role in the rescue of blocked DNA replication forks via replication fork reversal (RFR). RuvA specifically binds to HJ cruciform DNA, conferring on it an open structure. The RuvB hexamer acts as an ATP-dependent pump, pulling dsDNA into and through the RuvAB complex. RuvB forms 2 homohexamers on either side of HJ DNA bound by 1 or 2 RuvA tetramers; 4 subunits per hexamer contact DNA at a time. Coordinated motions by a converter formed by DNA-disengaged RuvB subunits stimulates ATP hydrolysis and nucleotide exchange. Immobilization of the converter enables RuvB to convert the ATP-contained energy into a lever motion, pulling 2 nucleotides of DNA out of the RuvA tetramer per ATP hydrolyzed, thus driving DNA branch migration. The RuvB motors rotate together with the DNA substrate, which together with the progressing nucleotide cycle form the mechanistic basis for DNA recombination by continuous HJ branch migration. Branch migration allows RuvC to scan DNA until it finds its consensus sequence, where it cleaves and resolves cruciform DNA. The chain is Holliday junction branch migration complex subunit RuvB from Synechococcus elongatus (strain ATCC 33912 / PCC 7942 / FACHB-805) (Anacystis nidulans R2).